The sequence spans 265 residues: C-type lectin domain family 12 member A (265 aa).

Topologically, residues 1-43 are cytoplasmic; it reads MSEEVTYADLQFQNSSEMEKIPEIGKFGEKAPPAPSHVWRPAA. The ITIM motif signature appears at 5-10; the sequence is VTYADL. Residue Tyr7 is modified to Phosphotyrosine. The helical; Signal-anchor for type II membrane protein transmembrane segment at 44–64 threads the bilayer; sequence LFLTLLCLLLLIGLGVLASMF. The Extracellular segment spans residues 65–265; the sequence is HVTLKIEMKK…QLGSTYFREA (201 aa). 2 N-linked (GlcNAc...) asparagine glycosylation sites follow: Asn88 and Asn98. 4 cysteine pairs are disulfide-bonded: Cys118-Cys130, Cys133-Cys144, Cys161-Cys248, and Cys227-Cys240. A C-type lectin domain is found at 140-249; sequence HKDSCYFLSD…CTYKKRMICE (110 aa). Residue Asn165 is glycosylated (N-linked (GlcNAc...) asparagine).

As to quaternary structure, homodimer; disulfide-linked. Interacts (when the ITIM motif is phosphorylated) with PTPN6 and PTPN11. Post-translationally, phosphorylated at Tyr-7 by SRC in the ITIM motif following ligand-binding, promoting recruitment of tyrosine-protein phosphatases PTPN6 and PTPN11. In terms of processing, highly N-glycosylated; glycosylation varies between cell types. Preferentially expressed in lymphoid tissues and immune cells, including natural killer (NK) cells, T-cells, dendritic cells and monocytes or macrophages. Detected in spleen macrophage-rich red pulp and in lymph node (at protein level). Detected in peripheral blood leukocytes, dendritic cells, bone marrow, monocytes, mononuclear leukocytes and macrophages.

The protein localises to the cell membrane. In terms of biological role, myeloid inhibitory C-type lectin receptor that acts as a negative regulator of myeloid cell activation. Myeloid cell inhibition is required to limit proinflammatory pathways and protect against excessive inflammation. Specifically recognizes and binds various structures, such as neutrophil extracellular traps (NETs) or monosodium urate crystals. Also acts as a pattern-recognition receptor for pathogen-associated molecules, such as plasmodium hemozoin or mycobacterial micolic acid. Ligand-binding induces phosphorylation of its ITIM motif, followed by recruitment of tyrosine-protein phosphatases PTPN6 and PTPN11, which counteract tyrosine-protein kinase SYK, thereby preventing myeloid cell activation. Acts as a pattern-recognition receptor for NETs in neutrophils: specifically recognizes DNA in NETs, leading to inhibit neutrophil activation and limit further NET formation. This regulation is essential for controlling key neutrophil responses and limit NET-mediated inflammatory conditions. Also recognizes dead cells by acting as a receptor for monosodium urate crystals, leading to down-regulate neutrophil activation. Binding to monosodium urate crystals also promotes the type I interferon response. Acts as an inhibitor of natural killer (NK) cell cytotoxicity. Also acts as an ihibitor of dendritic cell maturation in an IL10-dependent manner. The protein is C-type lectin domain family 12 member A of Homo sapiens (Human).